Consider the following 340-residue polypeptide: Biotin synthase (340 aa).

Positions Ser47–Lys269 constitute a Radical SAM core domain. Residues Cys62, Cys66, and Cys69 each contribute to the [4Fe-4S] cluster site. [2Fe-2S] cluster-binding residues include Cys106, Cys137, Cys197, and Arg273.

Belongs to the radical SAM superfamily. Biotin synthase family. In terms of assembly, homodimer. [4Fe-4S] cluster is required as a cofactor. It depends on [2Fe-2S] cluster as a cofactor.

The enzyme catalyses (4R,5S)-dethiobiotin + (sulfur carrier)-SH + 2 reduced [2Fe-2S]-[ferredoxin] + 2 S-adenosyl-L-methionine = (sulfur carrier)-H + biotin + 2 5'-deoxyadenosine + 2 L-methionine + 2 oxidized [2Fe-2S]-[ferredoxin]. Its pathway is cofactor biosynthesis; biotin biosynthesis; biotin from 7,8-diaminononanoate: step 2/2. Its function is as follows. Catalyzes the conversion of dethiobiotin (DTB) to biotin by the insertion of a sulfur atom into dethiobiotin via a radical-based mechanism. The polypeptide is Biotin synthase (Caulobacter sp. (strain K31)).